A 123-amino-acid polypeptide reads, in one-letter code: Histone H2B.1/H2B.2 (123 aa).

A disordered region spans residues 1–30 (MPPKVSGKAAKKAGKAQKNITKGDKKKNRK). O-linked (GlcNAc) serine glycosylation occurs at serine 110. Lysine 118 is covalently cross-linked (Glycyl lysine isopeptide (Lys-Gly) (interchain with G-Cter in ubiquitin)).

This sequence belongs to the histone H2B family. As to quaternary structure, the nucleosome is a histone octamer containing two molecules each of H2A, H2B, H3 and H4 assembled in one H3-H4 heterotetramer and two H2A-H2B heterodimers. The octamer wraps approximately 147 bp of DNA. Monoubiquitination of Lys-118 gives a specific tag for epigenetic transcriptional activation and is also prerequisite for histone H3 'Lys-4' and 'Lys-79' methylation. Post-translationally, glcNAcylation at Ser-110 promotes monoubiquitination of Lys-118. It fluctuates in response to extracellular glucose, and associates with transcribed genes.

The protein resides in the nucleus. It localises to the chromosome. Its function is as follows. Core component of nucleosome. Nucleosomes wrap and compact DNA into chromatin, limiting DNA accessibility to the cellular machineries which require DNA as a template. Histones thereby play a central role in transcription regulation, DNA repair, DNA replication and chromosomal stability. DNA accessibility is regulated via a complex set of post-translational modifications of histones, also called histone code, and nucleosome remodeling. The sequence is that of Histone H2B.1/H2B.2 from Tigriopus californicus (Marine copepod).